The following is a 322-amino-acid chain: Putative nickel/cobalt efflux system HI_1248 (322 aa).

A run of 6 helical transmembrane segments spans residues Gly7–Leu27, Ala54–Gly74, Leu100–Leu120, Thr137–Tyr157, Ile228–Leu248, and Leu294–Ser314.

This sequence belongs to the NiCoT transporter (TC 2.A.52) family.

It localises to the cell membrane. Efflux system for nickel and cobalt. The chain is Putative nickel/cobalt efflux system HI_1248 from Haemophilus influenzae (strain ATCC 51907 / DSM 11121 / KW20 / Rd).